The sequence spans 718 residues: Calpastatin (718 aa).

Disordered stretches follow at residues 1 to 189 (MNPA…MSST) and 210 to 238 (EKKTGVAGPPPDSVTPLGPDDAIDALSSD). A compositionally biased stretch (basic residues) spans 20–29 (PHSKKRHRRQ). Composition is skewed to basic and acidic residues over residues 30–61 (DAKTEPEKSQSTKPPVDHEKKAQEGKPKEHTK) and 68–104 (HASDGEGKHGRNEKTASRSKEPVTPAKRTEPETKPQD). K32 participates in a covalent cross-link: Glycyl lysine isopeptide (Lys-Gly) (interchain with G-Cter in SUMO2). The residue at position 49 (K49) is an N6-acetyllysine. At S86 the chain carries Phosphoserine. Positions 114 to 124 (AAGTTAAPGKA) are enriched in low complexity. Residues S133, S222, and S243 each carry the phosphoserine modification. An Inhibitory domain 1 repeat occupies 170–222 (TQEDSTAYTGPEISDPMSSTYIEELGKREVTIPPKYRELLEKKTGVAGPPPDS). Disordered stretches follow at residues 266–291 (ESAKVMRAAAPPQEKKRKVEEDAMSD) and 320–509 (EAKR…QLPA). S290 is subject to Blocked amino end (Ser); in form erythrocyte. One copy of the Inhibitory domain 2 repeat lies at 307–359 (EPELDLSSIKEVAEAKRKEEKVEKCGEDDETVPAEYRLKPATDKDGKPLLPEP). Basic and acidic residues-rich tracts occupy residues 320–331 (EAKRKEEKVEKC), 342–377 (YRLKPATDKDGKPLLPEPAEKPKPRSESELIDELSK), and 384–399 (SNEKQPKPTGKTEESK). 3 positions are modified to phosphoserine: S367, S369, and S376. Over residues 400–411 (AAVPAPVAEAVP) the composition is skewed to low complexity. A Phosphoserine modification is found at S444. The segment covering 446 to 496 (GRKEADPEEGKPVADKIKEKSKEEEREKLGEKEETIPPDYRLEEAKDKDGK) has biased composition (basic and acidic residues). An Inhibitory domain 3 repeat occupies 450-503 (ADPEEGKPVADKIKEKSKEEEREKLGEKEETIPPDYRLEEAKDKDGKPLLPSEP). Phosphoserine occurs at positions 520, 531, 579, and 581. The interval 543–718 (VSEVVSQSPA…KPKANEKNAS (176 aa)) is disordered. The span at 566 to 579 (PSNKELDDALDKLS) shows a compositional bias: basic and acidic residues. An Inhibitory domain 4 repeat occupies 587-640 (PDPDENKPMEDKVKERAKKEHKDKLGERDDTIPPEYRHLLDQGEQDKPEKPPTK). 2 stretches are compositionally biased toward basic and acidic residues: residues 587 to 650 (PDPD…KPAG) and 706 to 718 (ETSKPKANEKNAS).

This sequence belongs to the protease inhibitor I27 (calpastatin) family.

Its function is as follows. Specific inhibition of calpain (calcium-dependent cysteine protease). Plays a key role in postmortem tenderization of meat and have been proposed to be involved in muscle protein degradation in living tissue. In Oryctolagus cuniculus (Rabbit), this protein is Calpastatin (CAST).